Consider the following 83-residue polypeptide: Toxin BmKBT (83 aa).

An N-terminal signal peptide occupies residues 1-19 (MKAALLLVIFSLMLIGVLT). An LCN-type CS-alpha/beta domain is found at 21–81 (KSGYPTDHEG…TWSRATNKCR (61 aa)). Intrachain disulfides connect C31-C80, C35-C54, C41-C61, and C45-C63. K83 is a propeptide (removed by a carboxypeptidase).

The protein belongs to the long (4 C-C) scorpion toxin superfamily. Sodium channel inhibitor family. Beta subfamily. Expressed by the venom gland.

It is found in the secreted. This toxin increases the peak sodium current, slows down the inactivation of sodium channels (Nav), and prolongs the action potential of dorsal root ganglion neurons, which indicates that it behaves as a classical alpha-toxin. It binds to mammal brain and insect sodium channels, but with a different manner. This peptide may bind to a distinct receptor site on mammal brain sodium channels, which is unconnected with that for BmKAS (a beta-toxin), BmKIT2 (a beta-toxin) or BmK I (an alpha toxin). In contrast, the receptor site for BmKabT on insect sodium channels might be closely related to that for the beta-insect depressant toxin BmKIT2. Possesses potent toxicity in mice but induces only paralysis in cotton bollworm. This Olivierus martensii (Manchurian scorpion) protein is Toxin BmKBT.